We begin with the raw amino-acid sequence, 434 residues long: Phosphomethylpyrimidine synthase (434 aa).

Substrate is bound by residues asparagine 74, methionine 103, tyrosine 132, histidine 171, 193–195 (SRG), 234–237 (DGIR), and glutamate 273. Zn(2+) is bound at residue histidine 277. Tyrosine 300 is a binding site for substrate. A Zn(2+)-binding site is contributed by histidine 341. [4Fe-4S] cluster is bound by residues cysteine 417, cysteine 420, and cysteine 424.

This sequence belongs to the ThiC family. Homodimer. Requires [4Fe-4S] cluster as cofactor.

It carries out the reaction 5-amino-1-(5-phospho-beta-D-ribosyl)imidazole + S-adenosyl-L-methionine = 4-amino-2-methyl-5-(phosphooxymethyl)pyrimidine + CO + 5'-deoxyadenosine + formate + L-methionine + 3 H(+). It functions in the pathway cofactor biosynthesis; thiamine diphosphate biosynthesis. Catalyzes the synthesis of the hydroxymethylpyrimidine phosphate (HMP-P) moiety of thiamine from aminoimidazole ribotide (AIR) in a radical S-adenosyl-L-methionine (SAM)-dependent reaction. This chain is Phosphomethylpyrimidine synthase, found in Desulfotalea psychrophila (strain LSv54 / DSM 12343).